The primary structure comprises 62 residues: Small ribosomal subunit protein bS21 (62 aa).

This sequence belongs to the bacterial ribosomal protein bS21 family.

The protein is Small ribosomal subunit protein bS21 (rpsU) of Mycoplasma genitalium (strain ATCC 33530 / DSM 19775 / NCTC 10195 / G37) (Mycoplasmoides genitalium).